A 119-amino-acid chain; its full sequence is Large ribosomal subunit protein bL20 (119 aa).

The protein belongs to the bacterial ribosomal protein bL20 family.

In terms of biological role, binds directly to 23S ribosomal RNA and is necessary for the in vitro assembly process of the 50S ribosomal subunit. It is not involved in the protein synthesizing functions of that subunit. The sequence is that of Large ribosomal subunit protein bL20 from Mycoplasma capricolum subsp. capricolum (strain California kid / ATCC 27343 / NCTC 10154).